The following is a 68-amino-acid chain: Wasabi receptor toxin (68 aa).

An N-terminal signal peptide occupies residues 1-21; it reads MKYFTLALTLLFLLLINPCKD. A propeptide spanning residues 22 to 35 is cleaved from the precursor; it reads MNFAWAESSEKVER. 2 disulfide bridges follow: Cys-44–Cys-62 and Cys-48–Cys-58.

Belongs to the short scorpion toxin superfamily. Potassium channel inhibitor kappa-KTx family. Kappa-KTx 1 subfamily. Monomer. In terms of tissue distribution, expressed by the venom gland.

The protein resides in the secreted. It localises to the host cytoplasm. Its function is as follows. Cell-penetrating peptide (CPP) with defensive purpose that induces pain by specifically activating mammalian sensory neuron TRPA1 channels. It non-covalently binds to the same region than other TRPA1 agonists (irritants), but acts via a distinct biochemical mechanism. Its binding stabilizes the TRPA1 open state and diminishes calcium-permeability. Consequently, it produces pain and pain hypersensitivity, but fails to trigger efferent release of neuropeptides (CGRP) and neurogenic inflammation typically produced by noxious electrophiles. Is not active on voltage-gated potassium channels and other TRP channels. The chain is Wasabi receptor toxin from Urodacus manicatus (Black rock scorpion).